The chain runs to 337 residues: Glyceraldehyde-3-phosphate dehydrogenase 2 (337 aa).

NAD(+) contacts are provided by residues 11–12 (RI), aspartate 35, arginine 79, and threonine 121. D-glyceraldehyde 3-phosphate-binding positions include 153 to 155 (SCT), threonine 184, arginine 199, 212 to 213 (TG), and arginine 235. Cysteine 154 (nucleophile) is an active-site residue. Asparagine 317 serves as a coordination point for NAD(+).

Belongs to the glyceraldehyde-3-phosphate dehydrogenase family. In terms of assembly, homotetramer.

It is found in the cytoplasm. It carries out the reaction D-glyceraldehyde 3-phosphate + phosphate + NADP(+) = (2R)-3-phospho-glyceroyl phosphate + NADPH + H(+). The catalysed reaction is D-glyceraldehyde 3-phosphate + phosphate + NAD(+) = (2R)-3-phospho-glyceroyl phosphate + NADH + H(+). It functions in the pathway carbohydrate degradation; glycolysis; pyruvate from D-glyceraldehyde 3-phosphate: step 1/5. Functionally, involved in photosynthetic carbon assimilation. Catalyzes the NAD(P)-dependent oxidative phosphorylation of glyceraldehyde 3-phosphate (G3P) to 1,3-bisphosphoglycerate (BPG). The first reaction step involves the formation of a hemiacetal intermediate between G3P and a cysteine residue, and this hemiacetal intermediate is then oxidized to a thioester, with concomitant reduction of NAD to NADH. The reduced NADH is then exchanged with the second NAD, and the thioester is attacked by a nucleophilic inorganic phosphate to produce BPG. It can use both NADP and NAD. This chain is Glyceraldehyde-3-phosphate dehydrogenase 2 (gap2), found in Synechocystis sp. (strain ATCC 27184 / PCC 6803 / Kazusa).